A 247-amino-acid polypeptide reads, in one-letter code: Ubiquinone biosynthesis O-methyltransferase (247 aa).

S-adenosyl-L-methionine-binding residues include arginine 40, glycine 71, aspartate 92, and methionine 135.

It belongs to the methyltransferase superfamily. UbiG/COQ3 family.

The catalysed reaction is a 3-demethylubiquinol + S-adenosyl-L-methionine = a ubiquinol + S-adenosyl-L-homocysteine + H(+). It carries out the reaction a 3-(all-trans-polyprenyl)benzene-1,2-diol + S-adenosyl-L-methionine = a 2-methoxy-6-(all-trans-polyprenyl)phenol + S-adenosyl-L-homocysteine + H(+). It functions in the pathway cofactor biosynthesis; ubiquinone biosynthesis. O-methyltransferase that catalyzes the 2 O-methylation steps in the ubiquinone biosynthetic pathway. The chain is Ubiquinone biosynthesis O-methyltransferase from Ruegeria sp. (strain TM1040) (Silicibacter sp.).